The chain runs to 329 residues: Beta-ketoacyl-[acyl-carrier-protein] synthase III (329 aa).

Active-site residues include Cys-113 and His-255. Residues 256–260 (QANQR) form an ACP-binding region. The active site involves Asn-285.

Belongs to the thiolase-like superfamily. FabH family. As to quaternary structure, homodimer.

The protein localises to the cytoplasm. The enzyme catalyses malonyl-[ACP] + acetyl-CoA + H(+) = 3-oxobutanoyl-[ACP] + CO2 + CoA. Its pathway is lipid metabolism; fatty acid biosynthesis. In terms of biological role, catalyzes the condensation reaction of fatty acid synthesis by the addition to an acyl acceptor of two carbons from malonyl-ACP. Catalyzes the first condensation reaction which initiates fatty acid synthesis and may therefore play a role in governing the total rate of fatty acid production. Possesses both acetoacetyl-ACP synthase and acetyl transacylase activities. Its substrate specificity determines the biosynthesis of branched-chain and/or straight-chain of fatty acids. The sequence is that of Beta-ketoacyl-[acyl-carrier-protein] synthase III from Chlorobaculum tepidum (strain ATCC 49652 / DSM 12025 / NBRC 103806 / TLS) (Chlorobium tepidum).